The following is a 322-amino-acid chain: UDP-N-acetylenolpyruvoylglucosamine reductase (322 aa).

Residues 36–202 (RAGGPAQVLF…TSVLFEGVPG (167 aa)) form the FAD-binding PCMH-type domain. The active site involves Arg182. Ser231 (proton donor) is an active-site residue. Residue Glu301 is part of the active site.

This sequence belongs to the MurB family. It depends on FAD as a cofactor.

It is found in the cytoplasm. The catalysed reaction is UDP-N-acetyl-alpha-D-muramate + NADP(+) = UDP-N-acetyl-3-O-(1-carboxyvinyl)-alpha-D-glucosamine + NADPH + H(+). Its pathway is cell wall biogenesis; peptidoglycan biosynthesis. Functionally, cell wall formation. This chain is UDP-N-acetylenolpyruvoylglucosamine reductase, found in Brucella melitensis biotype 2 (strain ATCC 23457).